The following is a 229-amino-acid chain: Ribosomal RNA large subunit methyltransferase E (229 aa).

The segment at 1-20 (MSRAGNGGRQRIKTAKGRSA) is disordered. 5 residues coordinate S-adenosyl-L-methionine: G75, W77, D94, D110, and D134. The Proton acceptor role is filled by K174.

Belongs to the class I-like SAM-binding methyltransferase superfamily. RNA methyltransferase RlmE family.

Its subcellular location is the cytoplasm. It catalyses the reaction uridine(2552) in 23S rRNA + S-adenosyl-L-methionine = 2'-O-methyluridine(2552) in 23S rRNA + S-adenosyl-L-homocysteine + H(+). Functionally, specifically methylates the uridine in position 2552 of 23S rRNA at the 2'-O position of the ribose in the fully assembled 50S ribosomal subunit. The chain is Ribosomal RNA large subunit methyltransferase E from Rhizorhabdus wittichii (strain DSM 6014 / CCUG 31198 / JCM 15750 / NBRC 105917 / EY 4224 / RW1) (Sphingomonas wittichii).